We begin with the raw amino-acid sequence, 96 residues long: Small ribosomal subunit protein uS19 (96 aa).

Belongs to the universal ribosomal protein uS19 family.

Protein S19 forms a complex with S13 that binds strongly to the 16S ribosomal RNA. This is Small ribosomal subunit protein uS19 from Solibacter usitatus (strain Ellin6076).